Reading from the N-terminus, the 318-residue chain is Aspartate carbamoyltransferase catalytic subunit (318 aa).

Residues Arg58 and Thr59 each contribute to the carbamoyl phosphate site. Lys86 is an L-aspartate binding site. 3 residues coordinate carbamoyl phosphate: Arg108, His141, and Gln144. Residues Arg174 and Arg226 each contribute to the L-aspartate site. The carbamoyl phosphate site is built by Gly270 and Pro271.

Belongs to the aspartate/ornithine carbamoyltransferase superfamily. ATCase family. As to quaternary structure, heterododecamer (2C3:3R2) of six catalytic PyrB chains organized as two trimers (C3), and six regulatory PyrI chains organized as three dimers (R2).

It carries out the reaction carbamoyl phosphate + L-aspartate = N-carbamoyl-L-aspartate + phosphate + H(+). Its pathway is pyrimidine metabolism; UMP biosynthesis via de novo pathway; (S)-dihydroorotate from bicarbonate: step 2/3. Catalyzes the condensation of carbamoyl phosphate and aspartate to form carbamoyl aspartate and inorganic phosphate, the committed step in the de novo pyrimidine nucleotide biosynthesis pathway. This is Aspartate carbamoyltransferase catalytic subunit from Lactobacillus acidophilus (strain ATCC 700396 / NCK56 / N2 / NCFM).